Consider the following 520-residue polypeptide: Succinyl-CoA:3-ketoacid coenzyme A transferase 2B, mitochondrial (520 aa).

Residues 1 to 39 (MAALRLLAWALPRGVSALRPRPALPHRLIRRYVSDRSGS) constitute a mitochondrion transit peptide. A disordered region spans residues 280 to 299 (ERLTTRDSKPAPGSKDNDPS). Residue E342 is the 5-glutamyl coenzyme A thioester intermediate of the active site.

Belongs to the 3-oxoacid CoA-transferase family. Homodimer. As to expression, testis specific. Expressed in late spermatids. Accumulates during spermiogenesis. Also detected in the midpiece of spermatozoa.

It localises to the mitochondrion. The catalysed reaction is a 3-oxo acid + succinyl-CoA = a 3-oxoacyl-CoA + succinate. It functions in the pathway ketone metabolism; succinyl-CoA degradation; acetoacetyl-CoA from succinyl-CoA: step 1/1. Functionally, key enzyme for ketone body catabolism. Transfers the CoA moiety from succinate to acetoacetate. Formation of the enzyme-CoA intermediate proceeds via an unstable anhydride species formed between the carboxylate groups of the enzyme and substrate. Probably play and important roles in the energy metabolism of spermatozoa. The polypeptide is Succinyl-CoA:3-ketoacid coenzyme A transferase 2B, mitochondrial (Oxct2b) (Mus musculus (Mouse)).